The primary structure comprises 295 residues: Excinuclease cho (295 aa).

The 76-residue stretch at 33–108 folds into the GIY-YIG domain; it reads TRPGVYLFHG…IKEQQPLFNK (76 aa).

Incises the DNA at the 3' side of a lesion during nucleotide excision repair. Incises the DNA farther away from the lesion than UvrC. Not able to incise the 5' site of a lesion. When a lesion remains because UvrC is not able to induce the 3' incision, Cho incises the DNA. Then UvrC makes the 5' incision. The combined action of Cho and UvrC broadens the substrate range of nucleotide excision repair. The polypeptide is Excinuclease cho (cho) (Escherichia coli O6:H1 (strain CFT073 / ATCC 700928 / UPEC)).